Reading from the N-terminus, the 563-residue chain is Arginine--tRNA ligase (563 aa).

The 'HIGH' region signature appears at 121–131 (PNIAKPFSIGH).

Belongs to the class-I aminoacyl-tRNA synthetase family. As to quaternary structure, monomer.

It localises to the cytoplasm. It carries out the reaction tRNA(Arg) + L-arginine + ATP = L-arginyl-tRNA(Arg) + AMP + diphosphate. This is Arginine--tRNA ligase from Streptococcus thermophilus (strain CNRZ 1066).